The sequence spans 260 residues: Exosome complex component Rrp4 (260 aa).

One can recognise an S1 motif domain in the interval 59 to 128 (NDVVIGVVIV…SSMKIELALR (70 aa)). Positions 136-194 (RTGQIVEVEPVKVPRVIGHGGSMISMLKKETNCSIFVGQNGRIWIDGKDEDIELLSKAL) constitute a KH domain.

Belongs to the RRP4 family. As to quaternary structure, component of the archaeal exosome complex. Forms a trimer of Rrp4 and/or Csl4 subunits. The trimer associates with a hexameric ring-like arrangement composed of 3 Rrp41-Rrp42 heterodimers.

It localises to the cytoplasm. Non-catalytic component of the exosome, which is a complex involved in RNA degradation. Increases the RNA binding and the efficiency of RNA degradation. Confers strong poly(A) specificity to the exosome. The sequence is that of Exosome complex component Rrp4 from Methanosarcina mazei (strain ATCC BAA-159 / DSM 3647 / Goe1 / Go1 / JCM 11833 / OCM 88) (Methanosarcina frisia).